An 877-amino-acid chain; its full sequence is Dynamin (877 aa).

The 267-residue stretch at 23 to 289 (QLDLPQIAVV…LTNHIRDTLP (267 aa)) folds into the Dynamin-type G domain. The tract at residues 33–40 (GGQSAGKS) is G1 motif. 33–41 (GGQSAGKSS) provides a ligand contact to GTP. Residues 59–61 (VTR) are G2 motif. The interval 131-134 (DLPG) is G3 motif. Residues 200 to 203 (TKLD) are G4 motif. GTP contacts are provided by residues 200–206 (TKLDLMD) and 231–234 (NRSQ). The interval 230–233 (VNRS) is G5 motif. Positions 513–621 (QVIRKGHMVI…WKASFLRAGV (109 aa)) constitute a PH domain. Disordered regions lie at residues 623–648 (PEKQ…QLER) and 740–834 (TVSS…SGAV). Residues 630–641 (ENGDESASEESS) are compositionally biased toward acidic residues. The GED domain occupies 650–741 (VETIRNLVDS…IIGDVSMATV (92 aa)). A phosphoserine mark is found at S756, S764, and S767. The segment covering 788–826 (PPLPPSTGRPAPAIPNRPGGGAPPLPGGRPGGSLPPPML) has biased composition (pro residues).

This sequence belongs to the TRAFAC class dynamin-like GTPase superfamily. Dynamin/Fzo/YdjA family.

Its subcellular location is the cytoplasm. The protein resides in the cytoskeleton. The enzyme catalyses GTP + H2O = GDP + phosphate + H(+). In terms of biological role, microtubule-associated force-producing protein which is involved in the production of microtubule bundles and which is able to bind and hydrolyze GTP. Implicated in endocytic protein sorting. The protein is Dynamin (shi) of Drosophila melanogaster (Fruit fly).